A 190-amino-acid chain; its full sequence is Elongation factor P-like protein (190 aa).

Belongs to the elongation factor P family.

The sequence is that of Elongation factor P-like protein from Pseudoalteromonas atlantica (strain T6c / ATCC BAA-1087).